The chain runs to 404 residues: MSVTLDLSRVSSDAAPATPVTKPLINLSGLTRPQLVAALVESGVVEHGKAKMRATQIFRWMHHRGVTDFADMSDVAKETRARLAEAFTIARPEIVERQVSKDGTRKWLIRMAPGIEVESVYIPGVGRAGALCVSSQVGCTLNCSFCHTGTQPLVRNLTAAEIVAQVQVAKDDLAEWPSDKEDRQLSNIVFMGMGEPLYNLGQVADAIEIISDNEGIAISRRRITVSTSGVVPMLEKLGSTTQAMLAISLHATNDPLRDVLVPLNKKYPIAELMAGIRAYPGLSNARRVTFEYVMLKGVNDSPEEARALVKLIKGIPAKINLIPFNPWPGSDYQCSDWATIEAFAAILNKAGYSSPIRTPRGRDILAACGQLKSESEKVRASALRKLSLAAMAGVLSDDDEDETA.

Residue E118 is the Proton acceptor of the active site. Residues 125–357 form the Radical SAM core domain; the sequence is VGRAGALCVS…NKAGYSSPIR (233 aa). C132 and C368 form a disulfide bridge. The [4Fe-4S] cluster site is built by C139, C143, and C146. Residues 194–195, S226, 248–250, and N325 contribute to the S-adenosyl-L-methionine site; these read GE and SLH. Residue C368 is the S-methylcysteine intermediate of the active site.

It belongs to the radical SAM superfamily. RlmN family. [4Fe-4S] cluster is required as a cofactor.

The protein resides in the cytoplasm. It catalyses the reaction adenosine(2503) in 23S rRNA + 2 reduced [2Fe-2S]-[ferredoxin] + 2 S-adenosyl-L-methionine = 2-methyladenosine(2503) in 23S rRNA + 5'-deoxyadenosine + L-methionine + 2 oxidized [2Fe-2S]-[ferredoxin] + S-adenosyl-L-homocysteine. The catalysed reaction is adenosine(37) in tRNA + 2 reduced [2Fe-2S]-[ferredoxin] + 2 S-adenosyl-L-methionine = 2-methyladenosine(37) in tRNA + 5'-deoxyadenosine + L-methionine + 2 oxidized [2Fe-2S]-[ferredoxin] + S-adenosyl-L-homocysteine. In terms of biological role, specifically methylates position 2 of adenine 2503 in 23S rRNA and position 2 of adenine 37 in tRNAs. m2A2503 modification seems to play a crucial role in the proofreading step occurring at the peptidyl transferase center and thus would serve to optimize ribosomal fidelity. In Caulobacter vibrioides (strain ATCC 19089 / CIP 103742 / CB 15) (Caulobacter crescentus), this protein is Dual-specificity RNA methyltransferase RlmN.